The primary structure comprises 766 residues: MPRQFPKLNMSDLDEHVRLLAEKVFAKVLREEDSKDVMSLFTVPEDCPIGQKEAKERELQKELAEQKSVETAKRKKSFKMIRSQSLSLQMPTQQDWKGPPTASPAMSPATPLVPGATSKPGPAPYAMPEYQRVTISGDYCAGITVEDYEQAAKSLAKALMIREKYARLAYHRFPRTTAQYLAHQGESVPLEEGLPDFHPPPLPQEDPYCLDDAPPNLGYLVRMHGGVLFVYDNQTMLERQEPHSLPYPDLETYIVDMSHILALITDGPTKTYCHRRLNFLESKFSLHEMLNEMSEFKELKSNPHRDFYNVRKVDTHIHAAACMNQKHLLRFIKHTYQTEPDRTVAEKLGRKITLRQVFDSLHMDPYDLTVDSLDVHAGRQTFHRFDKFNSKYNPVGASELRDLYLKTENYLGGEYFARMVKEVARELEDSKYQYSEPRLSIYGRSPKEWSSLARWFIQHKVYSPNMRWIIQVPRIYDIFRSKKLLPNFGKMLENIFLPLFKATINPQDHRELHLFLKYVTGFDSVDDESKHSDHMFSDKSPSPDLWTSEQNPPYSYYLYYMYANIMVLNNLRRERGLSTFLFRPHCGEAGSITHLVSAFLTADNISHGLLLKKSPVLQYLYYLAQIPIAMSPLSNNSLFLEYSKNPLREFLHKGLHVSLSTDDPMQFHYTKEALMEEYAIAAQVWKLSTCDLCEIARNSVLQSGLSHQEKQKFLGQNYYKEGPEGNDIRKTNVAQIRMAFRYETLCNELSFLSDAMKSEEITALTK.

Residues Ser85 and Ser107 each carry the phosphoserine modification. Positions 89–114 are disordered; that stretch reads QMPTQQDWKGPPTASPAMSPATPLVP. Low complexity predominate over residues 99–110; sequence PPTASPAMSPAT. His316 and His318 together coordinate Zn(2+). Substrate-binding positions include His318 and 387-392; that span reads KFNSKY. Residue His585 coordinates Zn(2+). Glu588 provides a ligand contact to substrate. His607 functions as the Proton acceptor in the catalytic mechanism. Asp662 is a binding site for Zn(2+). A substrate-binding site is contributed by 663–666; the sequence is DPMQ.

It belongs to the metallo-dependent hydrolases superfamily. Adenosine and AMP deaminases family. As to quaternary structure, homotetramer. It depends on Zn(2+) as a cofactor. As to expression, found in heart, lung brain, spleen, kidney and to a lesser extent in liver.

The enzyme catalyses AMP + H2O + H(+) = IMP + NH4(+). The protein operates within purine metabolism; IMP biosynthesis via salvage pathway; IMP from AMP: step 1/1. In terms of biological role, AMP deaminase plays a critical role in energy metabolism. This is AMP deaminase 3 from Mus musculus (Mouse).